We begin with the raw amino-acid sequence, 205 residues long: Holliday junction branch migration complex subunit RuvA (205 aa).

Residues 1 to 62 are domain I; the sequence is MFEYVTGYVE…EDIMALYGFK (62 aa). Positions 63–141 are domain II; that stretch reads TREERLLFTK…DVVPDAFVDL (79 aa). A flexible linker region spans residues 142-152; it reads FSDTERFDEKK. Residues 153–205 form a domain III region; that stretch reads GSSAELDEALEALRALGYAEREVSRVVPELLKESLTTDQYIKKALSLLLNGKR.

It belongs to the RuvA family. As to quaternary structure, homotetramer. Forms an RuvA(8)-RuvB(12)-Holliday junction (HJ) complex. HJ DNA is sandwiched between 2 RuvA tetramers; dsDNA enters through RuvA and exits via RuvB. An RuvB hexamer assembles on each DNA strand where it exits the tetramer. Each RuvB hexamer is contacted by two RuvA subunits (via domain III) on 2 adjacent RuvB subunits; this complex drives branch migration. In the full resolvosome a probable DNA-RuvA(4)-RuvB(12)-RuvC(2) complex forms which resolves the HJ.

It is found in the cytoplasm. Functionally, the RuvA-RuvB-RuvC complex processes Holliday junction (HJ) DNA during genetic recombination and DNA repair, while the RuvA-RuvB complex plays an important role in the rescue of blocked DNA replication forks via replication fork reversal (RFR). RuvA specifically binds to HJ cruciform DNA, conferring on it an open structure. The RuvB hexamer acts as an ATP-dependent pump, pulling dsDNA into and through the RuvAB complex. HJ branch migration allows RuvC to scan DNA until it finds its consensus sequence, where it cleaves and resolves the cruciform DNA. The protein is Holliday junction branch migration complex subunit RuvA of Bacillus cereus (strain ATCC 14579 / DSM 31 / CCUG 7414 / JCM 2152 / NBRC 15305 / NCIMB 9373 / NCTC 2599 / NRRL B-3711).